The primary structure comprises 1590 residues: Pentafunctional AROM polypeptide (1590 aa).

The segment at 1 to 400 is 3-dehydroquinate synthase; the sequence is MSTANGSSPT…HEPKASSVDD (400 aa). Residues 49–51, 96–99, 127–129, and D132 contribute to the NAD(+) site; these read DTN, EGSK, and GGV. R143 is a 7-phospho-2-dehydro-3-deoxy-D-arabino-heptonate binding site. 152–153 provides a ligand contact to NAD(+); the sequence is TT. 7-phospho-2-dehydro-3-deoxy-D-arabino-heptonate contacts are provided by D159 and K165. NAD(+) is bound at residue K174. N175 contributes to the 7-phospho-2-dehydro-3-deoxy-D-arabino-heptonate binding site. NAD(+) contacts are provided by residues 192–195 and N203; that span reads FLNT. Residue E207 participates in Zn(2+) binding. 7-phospho-2-dehydro-3-deoxy-D-arabino-heptonate-binding positions include 207 to 210 and K266; that span reads EVIK. The Proton acceptor; for 3-dehydroquinate synthase activity role is filled by E276. 7-phospho-2-dehydro-3-deoxy-D-arabino-heptonate-binding positions include 280 to 284 and H287; that span reads RNLLN. H287 lines the Zn(2+) pocket. The active-site Proton acceptor; for 3-dehydroquinate synthase activity is the H291. 7-phospho-2-dehydro-3-deoxy-D-arabino-heptonate-binding residues include H303 and K372. Residue H303 coordinates Zn(2+). The tract at residues 413–856 is EPSP synthase; sequence VQPGVRPGLK…WDVLSGVFGV (444 aa). The For EPSP synthase activity role is filled by C838. The tract at residues 876 to 1070 is shikimate kinase; sequence NRSVFVIGMR…KAKPHSFFVS (195 aa). Position 883–890 (883–890) interacts with ATP; that stretch reads GMRGAGKS. Positions 1071–1285 are 3-dehydroquinase; sequence LTVPNITAHT…AAPGQLTAAE (215 aa). Residue H1187 is the Proton acceptor; for 3-dehydroquinate dehydratase activity of the active site. K1215 (schiff-base intermediate with substrate; for 3-dehydroquinate dehydratase activity) is an active-site residue. The segment at 1298-1590 is shikimate dehydrogenase; that stretch reads KRKFYLFGKP…IVMNGTSDSS (293 aa).

The protein in the N-terminal section; belongs to the sugar phosphate cyclases superfamily. Dehydroquinate synthase family. It in the 2nd section; belongs to the EPSP synthase family. In the 3rd section; belongs to the shikimate kinase family. This sequence in the 4th section; belongs to the type-I 3-dehydroquinase family. The protein in the C-terminal section; belongs to the shikimate dehydrogenase family. In terms of assembly, homodimer. The cofactor is Zn(2+).

It is found in the cytoplasm. It catalyses the reaction 7-phospho-2-dehydro-3-deoxy-D-arabino-heptonate = 3-dehydroquinate + phosphate. It carries out the reaction 3-dehydroquinate = 3-dehydroshikimate + H2O. The enzyme catalyses shikimate + NADP(+) = 3-dehydroshikimate + NADPH + H(+). The catalysed reaction is shikimate + ATP = 3-phosphoshikimate + ADP + H(+). It catalyses the reaction 3-phosphoshikimate + phosphoenolpyruvate = 5-O-(1-carboxyvinyl)-3-phosphoshikimate + phosphate. Its pathway is metabolic intermediate biosynthesis; chorismate biosynthesis; chorismate from D-erythrose 4-phosphate and phosphoenolpyruvate: step 2/7. It functions in the pathway metabolic intermediate biosynthesis; chorismate biosynthesis; chorismate from D-erythrose 4-phosphate and phosphoenolpyruvate: step 3/7. It participates in metabolic intermediate biosynthesis; chorismate biosynthesis; chorismate from D-erythrose 4-phosphate and phosphoenolpyruvate: step 4/7. The protein operates within metabolic intermediate biosynthesis; chorismate biosynthesis; chorismate from D-erythrose 4-phosphate and phosphoenolpyruvate: step 5/7. Its pathway is metabolic intermediate biosynthesis; chorismate biosynthesis; chorismate from D-erythrose 4-phosphate and phosphoenolpyruvate: step 6/7. Its function is as follows. The AROM polypeptide catalyzes 5 consecutive enzymatic reactions in prechorismate polyaromatic amino acid biosynthesis. This is Pentafunctional AROM polypeptide from Pyricularia oryzae (strain 70-15 / ATCC MYA-4617 / FGSC 8958) (Rice blast fungus).